The following is a 202-amino-acid chain: Complement component C8 gamma chain (202 aa).

Positions 1 to 20 are cleaved as a signal peptide; that stretch reads MLPPGTATLLTLLLAAGSLG. Residue Q21 is modified to Pyrrolidone carboxylic acid. C96 and C188 are joined by a disulfide.

This sequence belongs to the calycin superfamily. Lipocalin family. As to quaternary structure, heterotrimer of 3 chains: alpha (C8A), beta (C8B) and gamma (C8G); the alpha and gamma chains are disulfide bonded. Component of the membrane attack complex (MAC), composed of complement C5b, C6, C7, C8A, C8B, C8G and multiple copies of the pore-forming subunit C9.

It localises to the secreted. The protein localises to the target cell membrane. Its activity is regulated as follows. Membrane attack complex (MAC) assembly is inhibited by CD59, thereby protecting self-cells from damage during complement activation. MAC assembly is also inhibited by clusterin (CLU) chaperones that inhibit polymerization of C9. Functionally, component of the membrane attack complex (MAC), a multiprotein complex activated by the complement cascade, which inserts into a target cell membrane and forms a pore, leading to target cell membrane rupture and cell lysis. The MAC is initiated by proteolytic cleavage of C5 into complement C5b in response to the classical, alternative, lectin and GZMK complement pathways. The complement pathways consist in a cascade of proteins that leads to phagocytosis and breakdown of pathogens and signaling that strengthens the adaptive immune system. C8G, together with C8A and C8B, inserts into the target membrane, but does not form pores by itself. During MAC assembly, associates with C5b, C6 and C7 to form the C5b8 intermediate complex that inserts into the target membrane and traverses the bilayer increasing membrane rigidity. The polypeptide is Complement component C8 gamma chain (Homo sapiens (Human)).